The sequence spans 398 residues: Acetylornithine aminotransferase (398 aa).

A pyridoxal 5'-phosphate-binding site is contributed by Phe-129. Arg-132 lines the N(2)-acetyl-L-ornithine pocket. A pyridoxal 5'-phosphate-binding site is contributed by 214-217; the sequence is DEVQ. Residue Lys-243 is modified to N6-(pyridoxal phosphate)lysine. Ser-271 is a binding site for N(2)-acetyl-L-ornithine. Thr-272 provides a ligand contact to pyridoxal 5'-phosphate.

Belongs to the class-III pyridoxal-phosphate-dependent aminotransferase family. ArgD subfamily. Homodimer. Pyridoxal 5'-phosphate serves as cofactor.

Its subcellular location is the cytoplasm. The catalysed reaction is N(2)-acetyl-L-ornithine + 2-oxoglutarate = N-acetyl-L-glutamate 5-semialdehyde + L-glutamate. Its pathway is amino-acid biosynthesis; L-arginine biosynthesis; N(2)-acetyl-L-ornithine from L-glutamate: step 4/4. The sequence is that of Acetylornithine aminotransferase from Neisseria meningitidis serogroup B (strain ATCC BAA-335 / MC58).